A 205-amino-acid polypeptide reads, in one-letter code: Proteasome subunit beta (205 aa).

Residues methionine 1–glycine 8 constitute a propeptide, removed in mature form; by autocatalysis. The Nucleophile role is filled by threonine 9.

Belongs to the peptidase T1B family. The 20S proteasome core is composed of 14 alpha and 14 beta subunits that assemble into four stacked heptameric rings, resulting in a barrel-shaped structure. The two inner rings, each composed of seven catalytic beta subunits, are sandwiched by two outer rings, each composed of seven alpha subunits. The catalytic chamber with the active sites is on the inside of the barrel. Has a gated structure, the ends of the cylinder being occluded by the N-termini of the alpha-subunits. Is capped at one or both ends by the proteasome regulatory ATPase, PAN.

It is found in the cytoplasm. The catalysed reaction is Cleavage of peptide bonds with very broad specificity.. With respect to regulation, the formation of the proteasomal ATPase PAN-20S proteasome complex, via the docking of the C-termini of PAN into the intersubunit pockets in the alpha-rings, triggers opening of the gate for substrate entry. Interconversion between the open-gate and close-gate conformations leads to a dynamic regulation of the 20S proteasome proteolysis activity. Component of the proteasome core, a large protease complex with broad specificity involved in protein degradation. This Methanocella paludicola (strain DSM 17711 / JCM 13418 / NBRC 101707 / SANAE) protein is Proteasome subunit beta.